The sequence spans 473 residues: LEC14B protein (473 aa).

WD repeat units follow at residues 212–242 (GYSF…CVYD), 254–285 (AHES…KVWD), 301–331 (GHLE…KLWD), 377–413 (GHSV…YIYD), and 425–455 (YHKA…VKWE).

This sequence belongs to the WD repeat LEC14B family.

This Lithospermum erythrorhizon (Purple gromwell) protein is LEC14B protein.